Consider the following 57-residue polypeptide: uncharacterized protein (57 aa).

Residues 34–54 form a helical membrane-spanning segment; it reads AALLDAAALVVIPGLLTVAAV.

The protein localises to the membrane. This is an uncharacterized protein from Dictyostelium discoideum (Social amoeba).